Here is a 514-residue protein sequence, read N- to C-terminus: ATP synthase subunit alpha (514 aa).

Position 170-177 (170-177) interacts with ATP; it reads GDRQIGKT.

Belongs to the ATPase alpha/beta chains family. As to quaternary structure, F-type ATPases have 2 components, CF(1) - the catalytic core - and CF(0) - the membrane proton channel. CF(1) has five subunits: alpha(3), beta(3), gamma(1), delta(1), epsilon(1). CF(0) has three main subunits: a(1), b(2) and c(9-12). The alpha and beta chains form an alternating ring which encloses part of the gamma chain. CF(1) is attached to CF(0) by a central stalk formed by the gamma and epsilon chains, while a peripheral stalk is formed by the delta and b chains.

It is found in the cell inner membrane. The enzyme catalyses ATP + H2O + 4 H(+)(in) = ADP + phosphate + 5 H(+)(out). In terms of biological role, produces ATP from ADP in the presence of a proton gradient across the membrane. The alpha chain is a regulatory subunit. This Pseudomonas fluorescens (strain SBW25) protein is ATP synthase subunit alpha.